A 469-amino-acid chain; its full sequence is Citrate synthase, mitochondrial (469 aa).

The transit peptide at 1-28 (MAFFRTVTKLRSRLGQPPSLRDSVRCLQ) directs the protein to the mitochondrion. Catalysis depends on residues His-304, His-350, and Asp-405.

Belongs to the citrate synthase family. In terms of assembly, homodimer.

It is found in the mitochondrion matrix. It carries out the reaction oxaloacetate + acetyl-CoA + H2O = citrate + CoA + H(+). The protein operates within carbohydrate metabolism; tricarboxylic acid cycle; isocitrate from oxaloacetate: step 1/2. The polypeptide is Citrate synthase, mitochondrial (MCSI) (Fragaria ananassa (Strawberry)).